A 380-amino-acid chain; its full sequence is Tryptophan--tRNA ligase (380 aa).

The short motif at 81-89 (PSLGMHIGH) is the 'HIGH' region element. Residues 253-257 (KMSSS) carry the 'KMSKS' region motif.

This sequence belongs to the class-I aminoacyl-tRNA synthetase family.

It is found in the cytoplasm. It carries out the reaction tRNA(Trp) + L-tryptophan + ATP = L-tryptophyl-tRNA(Trp) + AMP + diphosphate + H(+). This Saccharolobus solfataricus (strain ATCC 35092 / DSM 1617 / JCM 11322 / P2) (Sulfolobus solfataricus) protein is Tryptophan--tRNA ligase.